Here is a 101-residue protein sequence, read N- to C-terminus: MAKQSMKAREVKRIKLAKKFYSRREHLKSIISDLSVLEQDRWKAVLKLQTFPRDSSPIRQRNRCSQTGRPHAFLRKFGLSRIKVREAAMRGEIPGLKKSSW.

Belongs to the universal ribosomal protein uS14 family. In terms of assembly, part of the 30S ribosomal subunit. Contacts proteins S3 and S10.

Binds 16S rRNA, required for the assembly of 30S particles and may also be responsible for determining the conformation of the 16S rRNA at the A site. This is Small ribosomal subunit protein uS14 from Buchnera aphidicola subsp. Baizongia pistaciae (strain Bp).